A 175-amino-acid polypeptide reads, in one-letter code: Probable coatomer subunit zeta-A (175 aa).

Belongs to the adaptor complexes small subunit family. Oligomeric complex that consists of at least the alpha, beta, beta', gamma, delta, epsilon and zeta subunits.

The protein resides in the cytoplasm. The protein localises to the golgi apparatus membrane. It localises to the cytoplasmic vesicle. It is found in the COPI-coated vesicle membrane. The coatomer is a cytosolic protein complex that binds to dilysine motifs and reversibly associates with Golgi non-clathrin-coated vesicles, which further mediate biosynthetic protein transport from the ER, via the Golgi up to the trans Golgi network. Coatomer complex is required for budding from Golgi membranes, and is essential for the retrograde Golgi-to-ER transport of dilysine-tagged proteins. The zeta subunit may be involved in regulating the coat assembly and, hence, the rate of biosynthetic protein transport due to its association-dissociation properties with the coatomer complex. This is Probable coatomer subunit zeta-A (copZa) from Dictyostelium discoideum (Social amoeba).